The sequence spans 377 residues: Histidinol-phosphate aminotransferase (377 aa).

Position 230 is an N6-(pyridoxal phosphate)lysine (lysine 230).

The protein belongs to the class-II pyridoxal-phosphate-dependent aminotransferase family. Histidinol-phosphate aminotransferase subfamily. Homodimer. Requires pyridoxal 5'-phosphate as cofactor.

The enzyme catalyses L-histidinol phosphate + 2-oxoglutarate = 3-(imidazol-4-yl)-2-oxopropyl phosphate + L-glutamate. Its pathway is amino-acid biosynthesis; L-histidine biosynthesis; L-histidine from 5-phospho-alpha-D-ribose 1-diphosphate: step 7/9. The protein is Histidinol-phosphate aminotransferase of Mycobacterium leprae (strain Br4923).